A 298-amino-acid chain; its full sequence is O-glycoside alpha-1,2-mannosyltransferase homolog 6 (298 aa).

E220 acts as the Nucleophile in catalysis.

The protein belongs to the glycosyltransferase 15 family.

It is found in the cytoplasm. The protein resides in the nucleus. Its function is as follows. Probable mannosyltransferase involved in O-glycosylation of cell wall and secreted proteins. This is O-glycoside alpha-1,2-mannosyltransferase homolog 6 (omh6) from Schizosaccharomyces pombe (strain 972 / ATCC 24843) (Fission yeast).